Reading from the N-terminus, the 115-residue chain is Large ribosomal subunit protein bL19 (115 aa).

It belongs to the bacterial ribosomal protein bL19 family.

In terms of biological role, this protein is located at the 30S-50S ribosomal subunit interface and may play a role in the structure and function of the aminoacyl-tRNA binding site. The protein is Large ribosomal subunit protein bL19 of Salmonella choleraesuis (strain SC-B67).